The following is a 212-amino-acid chain: Adenylate kinase (212 aa).

10–15 (GAGKGT) contributes to the ATP binding site. An NMP region spans residues 30–59 (AIGDIFRTIIKTSTSEAELINNYVKQGELI). AMP-binding positions include Arg-36, 57-59 (ELI), 85-88 (GYPR), and Gln-92. An LID region spans residues 122–160 (GRYSCKNCGKIYNRYFLQPKTDNVCDVCGSSTFDYRKDD). Arg-123 serves as a coordination point for ATP. 2 residues coordinate Zn(2+): Cys-126 and Cys-129. Residue 132-133 (IY) coordinates ATP. Residues Cys-146 and Cys-149 each contribute to the Zn(2+) site. AMP contacts are provided by Arg-157 and Arg-168. Lys-196 is a binding site for ATP.

This sequence belongs to the adenylate kinase family. In terms of assembly, monomer.

The protein resides in the cytoplasm. The catalysed reaction is AMP + ATP = 2 ADP. It participates in purine metabolism; AMP biosynthesis via salvage pathway; AMP from ADP: step 1/1. In terms of biological role, catalyzes the reversible transfer of the terminal phosphate group between ATP and AMP. Plays an important role in cellular energy homeostasis and in adenine nucleotide metabolism. The polypeptide is Adenylate kinase (Rickettsia africae (strain ESF-5)).